The sequence spans 23 residues: Elongation factor Tu (23 aa).

This sequence belongs to the GTP-binding elongation factor family. EF-Tu/EF-1A subfamily. In terms of assembly, monomer. In terms of processing, the N-terminus is blocked. The C-terminus may be subjected to proteolysis.

Its subcellular location is the cytoplasm. This protein promotes the GTP-dependent binding of aminoacyl-tRNA to the A-site of ribosomes during protein biosynthesis. This is Elongation factor Tu (tuf) from Delftia acidovorans (Pseudomonas acidovorans).